Here is a 671-residue protein sequence, read N- to C-terminus: DNA ligase (671 aa).

Residues 32 to 36 (DAEYD), 81 to 82 (SL), and glutamate 113 each bind NAD(+). Residue lysine 115 is the N6-AMP-lysine intermediate of the active site. NAD(+) is bound by residues arginine 136, glutamate 173, lysine 290, and lysine 314. Zn(2+) is bound by residues cysteine 408, cysteine 411, cysteine 426, and cysteine 432. In terms of domain architecture, BRCT spans 593–671 (EIDSPFAGKT…ETEMLRLLGS (79 aa)).

It belongs to the NAD-dependent DNA ligase family. LigA subfamily. It depends on Mg(2+) as a cofactor. Mn(2+) is required as a cofactor.

It catalyses the reaction NAD(+) + (deoxyribonucleotide)n-3'-hydroxyl + 5'-phospho-(deoxyribonucleotide)m = (deoxyribonucleotide)n+m + AMP + beta-nicotinamide D-nucleotide.. Functionally, DNA ligase that catalyzes the formation of phosphodiester linkages between 5'-phosphoryl and 3'-hydroxyl groups in double-stranded DNA using NAD as a coenzyme and as the energy source for the reaction. It is essential for DNA replication and repair of damaged DNA. This Escherichia fergusonii (strain ATCC 35469 / DSM 13698 / CCUG 18766 / IAM 14443 / JCM 21226 / LMG 7866 / NBRC 102419 / NCTC 12128 / CDC 0568-73) protein is DNA ligase.